The following is a 540-amino-acid chain: Signal peptide peptidase-like 2 (540 aa).

An N-terminal signal peptide occupies residues 1-27 (MDSLRFLRILLLSSSILLLSLRSTVTA). Topologically, residues 28–196 (GDIVHQDNLA…PRRPAVDVAE (169 aa)) are lumenal. N-linked (GlcNAc...) asparagine glycosylation occurs at Asn-83. In terms of domain architecture, PA spans 95 to 173 (SCTPLKNKLS…QDAGASLQKM (79 aa)). N-linked (GlcNAc...) asparagine glycosylation is present at Asn-176. Residues 197-217 (VFLWLMAIGTILCASYWSAWS) form a helical membrane-spanning segment. The Cytoplasmic segment spans residues 218–248 (AREAAIEHDKLLKDAIDEIPNTNDGGSGVVE). A helical transmembrane segment spans residues 249 to 269 (INSISAIFFVVLASGFLVILY). The Lumenal portion of the chain corresponds to 270–278 (KLMSYWFVE). The chain crosses the membrane as a helical span at residues 279 to 299 (LLVVVFCIGGVEGLQTCLVAL). Topologically, residues 300 to 319 (LSRWFQRAADTYVKVPFLGP) are cytoplasmic. A helical transmembrane segment spans residues 320 to 340 (ISYLTLAVSPFCIVFAVLWAV). The Lumenal segment spans residues 341–345 (YRVHS). A helical transmembrane segment spans residues 346-366 (FAWIGQDVLGIALIITVLQIV). Residues 367–370 (HVPN) are Cytoplasmic-facing. A helical membrane pass occupies residues 371 to 391 (LKVGTVLLSCAFLYDIFWVFV). The active site involves Asp-385. Residues 392-429 (SKKLFHESVMIVVARGDKSGEDGIPMLLKIPRMFDPWG) lie on the Lumenal side of the membrane. A helical membrane pass occupies residues 430 to 450 (GYSIIGFGDILLPGLLIAFAL). Asp-438 is a catalytic residue. Over 451 to 462 (RYDWLANKTLRT) the chain is Cytoplasmic. The helical transmembrane segment at 463-483 (GYFIWAMVAYGLGLLITYVAL) threads the bilayer. Over 484 to 488 (NLMDG) the chain is Lumenal. Residues 489 to 509 (HGQPALLYIVPFTLGTMLTLA) form a helical membrane-spanning segment. The PAL signature appears at 492 to 494 (PAL). Residues 510–540 (RKRDDLWILWTKGEPERACPHHVRLEQCSEK) lie on the Cytoplasmic side of the membrane.

This sequence belongs to the peptidase A22B family. In terms of processing, glycosylated. In terms of tissue distribution, ubiquitous.

It is found in the endosome membrane. Intramembrane-cleaving aspartic protease (I-CLiP) that cleaves type II membrane signal peptides in the hydrophobic plane of the membrane. The sequence is that of Signal peptide peptidase-like 2 (SPPL2) from Arabidopsis thaliana (Mouse-ear cress).